Here is a 238-residue protein sequence, read N- to C-terminus: Ion-translocating oxidoreductase complex subunit E (238 aa).

5 consecutive transmembrane segments (helical) span residues 41 to 61 (LGLG…VSLV), 71 to 91 (LPAF…LMQA), 95 to 115 (ELYQ…VILG), 130 to 150 (SFDG…LGGL), and 184 to 204 (GFLL…LIAL).

This sequence belongs to the NqrDE/RnfAE family. In terms of assembly, the complex is composed of six subunits: RnfA, RnfB, RnfC, RnfD, RnfE and RnfG.

Its subcellular location is the cell inner membrane. Part of a membrane-bound complex that couples electron transfer with translocation of ions across the membrane. This is Ion-translocating oxidoreductase complex subunit E from Pseudomonas aeruginosa (strain LESB58).